Consider the following 315-residue polypeptide: DNA-directed RNA polymerase subunit alpha (315 aa).

Positions 1 to 228 (MIGMEKPKIE…EHLELFISLT (228 aa)) are alpha N-terminal domain (alpha-NTD). The segment at 245–315 (RNKLMEMTIE…FGLSLRQPDD (71 aa)) is alpha C-terminal domain (alpha-CTD).

It belongs to the RNA polymerase alpha chain family. Homodimer. The RNAP catalytic core consists of 2 alpha, 1 beta, 1 beta' and 1 omega subunit. When a sigma factor is associated with the core the holoenzyme is formed, which can initiate transcription.

It carries out the reaction RNA(n) + a ribonucleoside 5'-triphosphate = RNA(n+1) + diphosphate. Functionally, DNA-dependent RNA polymerase catalyzes the transcription of DNA into RNA using the four ribonucleoside triphosphates as substrates. The sequence is that of DNA-directed RNA polymerase subunit alpha from Symbiobacterium thermophilum (strain DSM 24528 / JCM 14929 / IAM 14863 / T).